The chain runs to 620 residues: MTTTDTAPQTQPFQAEVAELLNLMVHSVYSETEIFLRELISNGSDALDKLRYEAISKPDLMEAGGTPKIQIVPKKAPDTLSVIDNGIGMDRQELIDNLGTIAKSGTKSFLTKLTEAKDGSNLIGQFGVGFYAAFMVADRIVVTSRRAGSTEAWTWTSSGGAGFEIAPASAEEAERIVRGTEIVLHLKPEAAKYLEAYQIERIVSAYSDNIQFPIELVPEEGEARQINSASALWQRSKSELAAEDYKQAYKSIANAFDDPAMTLHYRAEGRYSYAVMLFAPSTKPFDLFEPQRKGHVKLYVRRVFITDDADLLPAYLRFIRGVIDSEDLPLNLSREMLQNNPQLVQIRKAVTGKVIGELESLGEKDPENFAKIWDAFGPVIKEGIWEDYERREKLLALSRFTTTKGDNRTLKNYVEDLRDNQTEIYYLVGDSLERLKSNPKLESAAARGIEVLLLTDPVDAFWTSAPLDFGGKPLKSLSQGDVNFDLIPTTDEAKDEQPKPETDEALVIATIKDALGERVSDVRASQRLTASASCLIAGGQGPDRALERMLAQQNRGGASKPILEINLRHPLVAAIGRPGNADAADLSLLLLEQAQILDGELPEDPAGFAGRINRLVLRAL.

Positions 1–334 (MTTTDTAPQT…SEDLPLNLSR (334 aa)) are a; substrate-binding. The tract at residues 335-548 (EMLQNNPQLV…GQGPDRALER (214 aa)) is b. Positions 549-620 (MLAQQNRGGA…RINRLVLRAL (72 aa)) are c.

This sequence belongs to the heat shock protein 90 family. In terms of assembly, homodimer.

It localises to the cytoplasm. Its function is as follows. Molecular chaperone. Has ATPase activity. The sequence is that of Chaperone protein HtpG from Rhodopseudomonas palustris (strain BisA53).